A 655-amino-acid chain; its full sequence is MGIFSIANQHIRFAVKLATAIVLALFVGFHFQLETPRWAVLTAAIVAAGPAFAAGGEPYSGAIRYRGFLRIIGTFIGCIAGLVIIIAMIRAPLLMILVCCIWAGFCTWISSLVRIENSYAWGLAGYTALIIVITIQPEPLLTPQFAVERCSEIVIGIVCAIIADLLFSPRSIKQEVDRELESLLVAQYQLMQLCIKHGDGEVVDKAWGDLVRRTTGLQGMRSNLNMESSRWARANRRLKAINTLSLTLITQSCETYLIQNTRPELITDTFREFFDTPVETAQDVHKQLKRLRRVIAWTGERETPVTIYSWVAAATRYQLLKRGVISNTKINATEEEILQGEPEVKVESAERHHAMVNFWRTTLSCILGTLFWLWTGWTSGSGAMVMIAVVTSLAMRLPNPRMVAIDFIYGTLAALPLGLLYFLVIIPNTQQSMLLLCISLAVLGFFLGIEVQQRLLGSMGALASTINIIVLDNPMTFHFSQFLDSALGQIVGCVLAFTVILLVRDKSRDRTGRVLLNQFVSAAVSAMTTNVARRKENHLPALYQQLFLLMNKFPGDLPKFRLALTMIIAHQRLRDAPIPVNEDLSAFHRQMRRTADHVISARSDDKRRRYFGQLLEELEIYQEKLRIWQAPPQVTEPVHRLAGMLHKYQHALTDS.

Transmembrane regions (helical) follow at residues 13 to 33 (FAVK…HFQL), 38 to 58 (WAVL…GGEP), 69 to 89 (LRII…IAMI), 93 to 113 (LLMI…SSLV), 121 to 141 (WGLA…EPLL), 152 to 172 (EIVI…PRSI), 370 to 390 (LFWL…IAVV), 407 to 427 (FIYG…VIIP), 431 to 451 (QSML…GIEV), 455 to 475 (LLGS…DNPM), and 482 to 502 (FLDS…VILL).

This sequence belongs to the aromatic acid exporter ArAE (TC 2.A.85) family.

The protein localises to the cell inner membrane. Functionally, forms an efflux pump with AaeA. Could function as a metabolic relief valve, allowing to eliminate certain compounds when they accumulate to high levels in the cell. This is p-hydroxybenzoic acid efflux pump subunit AaeB from Shigella boydii serotype 4 (strain Sb227).